A 341-amino-acid chain; its full sequence is Tetraacyldisaccharide 4'-kinase (341 aa).

64 to 71 (AVGGSGKT) is an ATP binding site.

It belongs to the LpxK family.

The catalysed reaction is a lipid A disaccharide + ATP = a lipid IVA + ADP + H(+). Its pathway is glycolipid biosynthesis; lipid IV(A) biosynthesis; lipid IV(A) from (3R)-3-hydroxytetradecanoyl-[acyl-carrier-protein] and UDP-N-acetyl-alpha-D-glucosamine: step 6/6. Functionally, transfers the gamma-phosphate of ATP to the 4'-position of a tetraacyldisaccharide 1-phosphate intermediate (termed DS-1-P) to form tetraacyldisaccharide 1,4'-bis-phosphate (lipid IVA). This is Tetraacyldisaccharide 4'-kinase from Azoarcus sp. (strain BH72).